A 281-amino-acid chain; its full sequence is Sulfur carrier protein FdhD (281 aa).

Catalysis depends on Cys-127, which acts as the Cysteine persulfide intermediate. Residue 264-269 (FAREGR) participates in Mo-bis(molybdopterin guanine dinucleotide) binding.

Belongs to the FdhD family.

It localises to the cytoplasm. Required for formate dehydrogenase (FDH) activity. Acts as a sulfur carrier protein that transfers sulfur from IscS to the molybdenum cofactor prior to its insertion into FDH. The chain is Sulfur carrier protein FdhD from Mannheimia succiniciproducens (strain KCTC 0769BP / MBEL55E).